A 306-amino-acid polypeptide reads, in one-letter code: L-lactate dehydrogenase (306 aa).

NAD(+) contacts are provided by residues Val-11, Asp-32, Lys-37, and 76–77 (GA). Substrate contacts are provided by Gln-79 and Arg-85. NAD(+) is bound by residues Ser-98, 115 to 117 (VSN), and Ser-140. Residue 117–120 (NPVD) participates in substrate binding. A substrate-binding site is contributed by 145–148 (DTAR). Residues Arg-150 and His-165 each contribute to the beta-D-fructose 1,6-bisphosphate site. The Proton acceptor role is filled by His-172. Tyr-214 carries the post-translational modification Phosphotyrosine. Thr-223 lines the substrate pocket.

Belongs to the LDH/MDH superfamily. LDH family. Homotetramer.

The protein localises to the cytoplasm. The catalysed reaction is (S)-lactate + NAD(+) = pyruvate + NADH + H(+). It functions in the pathway fermentation; pyruvate fermentation to lactate; (S)-lactate from pyruvate: step 1/1. Its activity is regulated as follows. Allosterically activated by fructose 1,6-bisphosphate (FBP). Catalyzes the conversion of lactate to pyruvate. This chain is L-lactate dehydrogenase, found in Synechococcus sp. (strain JA-3-3Ab) (Cyanobacteria bacterium Yellowstone A-Prime).